A 315-amino-acid polypeptide reads, in one-letter code: Atrochrysone carboxyl ACP thioesterase (315 aa).

Zn(2+) is bound by residues H95, H97, D99, and H100. D99 functions as the Proton donor/acceptor in the catalytic mechanism.

Belongs to the metallo-beta-lactamase superfamily. The cofactor is Zn(2+). In terms of tissue distribution, endocrocin is specifically produced in conidia.

The enzyme catalyses atrochrysone carboxyl-[ACP] + H2O = atrochrysone carboxylate + holo-[ACP] + H(+). Functionally, atrochrysone carboxyl ACP thioesterase; part of the gene cluster that mediates the biosynthesis of endocrocin, a simple anthraquinone interesting for many biotechnological applications. The pathway begins with the synthesis of atrochrysone thioester by the polyketide synthase (PKS) encA. The atrochrysone carboxyl ACP thioesterase encB then breaks the thioester bond and releases the atrochrysone carboxylic acid from encA. The atrochrysone carboxylic acid is then converted to endocrocin anthrone which is further oxidized into endocrocin by the anthrone oxygenase encC. The exact function of encD has not been identified yet, but it negatively regulates endocrocin production, likely through the modification of endocrocin itself. The sequence is that of Atrochrysone carboxyl ACP thioesterase from Aspergillus fumigatus (strain ATCC MYA-4609 / CBS 101355 / FGSC A1100 / Af293) (Neosartorya fumigata).